The following is a 342-amino-acid chain: Ketol-acid reductoisomerase (NADP(+)) (342 aa).

The 180-residue stretch at 2–181 folds into the KARI N-terminal Rossmann domain; that stretch reads VKVYYNGDIK…GGARAGVLET (180 aa). Residues 25–28, Arg-48, Ser-52, and 82–85 each bind NADP(+); these read YGSQ and DEQQ. His-107 is an active-site residue. NADP(+) is bound at residue Gly-133. Residues 182–327 form the KARI C-terminal knotted domain; sequence TFKEETETDL…RKLREMMPFV (146 aa). 4 residues coordinate Mg(2+): Asp-190, Glu-194, Glu-226, and Glu-230. Position 251 (Ser-251) interacts with substrate.

The protein belongs to the ketol-acid reductoisomerase family. Mg(2+) serves as cofactor.

The catalysed reaction is (2R)-2,3-dihydroxy-3-methylbutanoate + NADP(+) = (2S)-2-acetolactate + NADPH + H(+). It carries out the reaction (2R,3R)-2,3-dihydroxy-3-methylpentanoate + NADP(+) = (S)-2-ethyl-2-hydroxy-3-oxobutanoate + NADPH + H(+). It participates in amino-acid biosynthesis; L-isoleucine biosynthesis; L-isoleucine from 2-oxobutanoate: step 2/4. The protein operates within amino-acid biosynthesis; L-valine biosynthesis; L-valine from pyruvate: step 2/4. Involved in the biosynthesis of branched-chain amino acids (BCAA). Catalyzes an alkyl-migration followed by a ketol-acid reduction of (S)-2-acetolactate (S2AL) to yield (R)-2,3-dihydroxy-isovalerate. In the isomerase reaction, S2AL is rearranged via a Mg-dependent methyl migration to produce 3-hydroxy-3-methyl-2-ketobutyrate (HMKB). In the reductase reaction, this 2-ketoacid undergoes a metal-dependent reduction by NADPH to yield (R)-2,3-dihydroxy-isovalerate. The protein is Ketol-acid reductoisomerase (NADP(+)) of Bacillus licheniformis (strain ATCC 14580 / DSM 13 / JCM 2505 / CCUG 7422 / NBRC 12200 / NCIMB 9375 / NCTC 10341 / NRRL NRS-1264 / Gibson 46).